The sequence spans 374 residues: MSRVEAILSQLKDVAANPKKAMDDYKAETGKGAVGIMPIYSPEEMVHAAGYLPMGIWGAQGKTISKARTYLPAFACSVMQQVMELQCEGAYDDLSAVIFSVPCDTLKCLSQKWKGTSPVIVFTHPQNRGLEAANQFLVTEYELVKAQLESVLGVKISNAALENSIAIYNENRAVMREFVKVAADYPQVIDAVSRHAVFKARQFMLKEKHTALVKELIAEIKATPVQPWDGKKVVVTGILLEPNELLDIFNEFKIAIVDDDLAQESRQIRVDVLDGEGGPLYRMAKAWQQMYGCSLATDTKKGRGRMLINKTIQTGADAIVVAMMKFCDPEEWDYPVMYREFEEKGVKSLMIEVDQEVSSFEQIKTRLQSFVEML.

It belongs to the FldB/FldC dehydratase alpha/beta subunit family. Heterodimer of an alpha (LcdA) and a beta (LcdB) subunit. The cofactor is [4Fe-4S] cluster. FMN is required as a cofactor. Requires riboflavin as cofactor. It depends on Mg(2+) as a cofactor.

It catalyses the reaction (R)-lactoyl-CoA = acryloyl-CoA + H2O. The catalysed reaction is (2R)-hydroxybutanoyl-CoA = (2E)-butenoyl-CoA + H2O. Its activity is regulated as follows. Activated by the LcdC protein. In terms of biological role, involved in the acrylate pathway for the conversion of D-lactic acid to propionic acid. Catalyzes the reversible dehydration of Lactoyl-CoA and 2-hydroxybutyroyl-CoA to acryloyl-CoA and crotonyl-CoA, respectively. This Anaerotignum propionicum (Clostridium propionicum) protein is Lactoyl-CoA dehydratase subunit beta (lcdB).